We begin with the raw amino-acid sequence, 614 residues long: Cathepsin F (614 aa).

An N-terminal signal peptide occupies residues 1 to 20 (MRLFAAATVALVLLLGQAAG). A propeptide spans 21–393 (EELAEERAGQ…AAVVPAYHGE (373 aa)) (activation peptide). Residues 25 to 50 (EERAGQAQGDAESTESSETTTDQAVS) are disordered. Residues 29–45 (GQAQGDAESTESSETTT) show a composition bias toward low complexity. A glycan (N-linked (GlcNAc...) asparagine) is linked at Asn-151. 2 cysteine pairs are disulfide-bonded: Cys-415/Cys-456 and Cys-449/Cys-489. Cys-418 is a catalytic residue. N-linked (GlcNAc...) asparagine glycosylation is found at Asn-492 and Asn-510. A disulfide bridge links Cys-548 with Cys-602. Catalysis depends on residues His-555 and Asn-581.

It belongs to the peptidase C1 family.

It carries out the reaction The recombinant enzyme cleaves synthetic substrates with Phe and Leu (better than Val) in P2, with high specificity constant (kcat/Km) comparable to that of cathepsin L.. In terms of biological role, may have a role in autophagic cell death. This is Cathepsin F from Drosophila melanogaster (Fruit fly).